Consider the following 254-residue polypeptide: Low affinity immunoglobulin gamma Fc region receptor III-A (254 aa).

A signal peptide spans 1-16; sequence MWQLLLPTALLLLVSA. Residues 17–208 lie on the Extracellular side of the membrane; that stretch reads GMRTEDLPKA…ISSFFPPGYQ (192 aa). Ig-like C2-type domains follow at residues 24–105 and 107–189; these read PKAV…LEVH and GWLL…VNIT. C47 and C89 are oxidised to a cystine. N-linked (GlcNAc...) asparagine glycans are attached at residues N56, N63, and N92. A disulfide bridge links C128 with C172. N-linked (GlcNAc...) asparagine glycans are attached at residues N180 and N187. The chain crosses the membrane as a helical span at residues 209–229; the sequence is VSFCLVMVLLFAVDTGLYFSV. The Cytoplasmic segment spans residues 230–254; that stretch reads KTNIRSSTRDWKDHKFKWRKDPQDK. At S236 the chain carries Phosphoserine; by PKC. A Phosphothreonine; by PKC modification is found at T237.

As to quaternary structure, forms a heterooligomeric complex with ITAM-containing signaling subunits, either a homodimer of CD247, a homodimer of FCER1G or a heterodimer of CD247 and FCER1G. Interacts (via transmembrane domain) with signaling subunits; this interaction is a prerequisite for receptor complex expression on the cell surface and intracellular signal transduction. Binds the Fc region of antigen-complexed IgG with a preference for IgG1 and IgG3 isotypes. Interacts with CD2; this interaction is involved in NK cell activation and cytotoxicity. Interacts with S100A4; this interaction inhibits PKC-dependent phosphorylation of FCGR3A. Glycosylated. Contains high mannose- and complex-type oligosaccharides. Glycosylation at Asn-180 is mandatory for high affinity binding to the Fc and for discrimination between fucosylated and afucosylated IgG glycoforms. Post-translationally, undergoes rapid ectodomain shedding upon NK cell stimulation. The soluble form is produced by a proteolytic cleavage mediated by ADAM17. Repeated stimulation causes receptor shedding, a mechanism that allows for increased NK cell motility and detachment from opsonized target cells while avoiding activation-induced NK cell apoptosis. In terms of processing, phosphorylated at RSSTR motif by PKC. The relevant physiological PKCs might be PRKCI, PRKCG, PRKCE, PRKCH and PRKCQ. In terms of tissue distribution, expressed in natural killer cells (at protein level). Expressed in a subset of circulating monocytes (at protein level).

It is found in the cell membrane. The protein localises to the secreted. Functionally, receptor for the invariable Fc fragment of immunoglobulin gamma (IgG). Optimally activated upon binding of clustered antigen-IgG complexes displayed on cell surfaces, triggers lysis of antibody-coated cells, a process known as antibody-dependent cellular cytotoxicity (ADCC). Does not bind free monomeric IgG, thus avoiding inappropriate effector cell activation in the absence of antigenic trigger. Mediates IgG effector functions on natural killer (NK) cells. Binds antigen-IgG complexes generated upon infection and triggers NK cell-dependent cytokine production and degranulation to limit viral load and propagation. Involved in the generation of memory-like adaptive NK cells capable to produce high amounts of IFNG and to efficiently eliminate virus-infected cells via ADCC. Regulates NK cell survival and proliferation, in particular by preventing NK cell progenitor apoptosis. Fc-binding subunit that associates with CD247 and/or FCER1G adapters to form functional signaling complexes. Following the engagement of antigen-IgG complexes, triggers phosphorylation of immunoreceptor tyrosine-based activation motif (ITAM)-containing adapters with subsequent activation of phosphatidylinositol 3-kinase signaling and sustained elevation of intracellular calcium that ultimately drive NK cell activation. The ITAM-dependent signaling coupled to receptor phosphorylation by PKC mediates robust intracellular calcium flux that leads to production of pro-inflammatory cytokines, whereas in the absence of receptor phosphorylation it mainly activates phosphatidylinositol 3-kinase signaling leading to cell degranulation. Costimulates NK cells and trigger lysis of target cells independently of IgG binding. Mediates the antitumor activities of therapeutic antibodies. Upon ligation on monocytes triggers TNFA-dependent ADCC of IgG-coated tumor cells. Mediates enhanced ADCC in response to afucosylated IgGs. Its function is as follows. (Microbial infection) Involved in Dengue virus pathogenesis via antibody-dependent enhancement (ADE) mechanism. Secondary infection with Dengue virus triggers elevated levels of afucosylated non-neutralizing IgG1s with reactivity to viral envelope/E protein. Viral antigen-IgG1 complexes bind with high affinity to FCGR3A, facilitating virus entry in myeloid cells and subsequent viral replication. The sequence is that of Low affinity immunoglobulin gamma Fc region receptor III-A from Homo sapiens (Human).